Here is a 175-residue protein sequence, read N- to C-terminus: NADH-ubiquinone oxidoreductase chain 6 (175 aa).

5 consecutive transmembrane segments (helical) span residues 1–21 (MMTYIVFILSIIFVISFVGFS), 25–45 (SPIYGGLVLIISGAVGCGIVL), 47–67 (FGGSFLGLMVFLIYLGGMLVV), 88–108 (AVLGAFVMGLLSELLLACYIL), and 149–169 (YGTWLVIVTGWSLFIGVLVIM).

It belongs to the complex I subunit 6 family. Core subunit of respiratory chain NADH dehydrogenase (Complex I) which is composed of 45 different subunits.

The protein resides in the mitochondrion inner membrane. The enzyme catalyses a ubiquinone + NADH + 5 H(+)(in) = a ubiquinol + NAD(+) + 4 H(+)(out). Functionally, core subunit of the mitochondrial membrane respiratory chain NADH dehydrogenase (Complex I) which catalyzes electron transfer from NADH through the respiratory chain, using ubiquinone as an electron acceptor. Essential for the catalytic activity and assembly of complex I. The polypeptide is NADH-ubiquinone oxidoreductase chain 6 (MT-ND6) (Halichoerus grypus (Gray seal)).